The chain runs to 199 residues: Prolactin-1 (199 aa).

3 cysteine pairs are disulfide-bonded: C4/C11, C58/C174, and C191/C199. N60 is a glycosylation site (N-linked (GlcNAc...) asparagine).

Belongs to the somatotropin/prolactin family. Post-translationally, glycosylated.

The protein localises to the secreted. The polypeptide is Prolactin-1 (Crocodylus novaeguineae (Crocodile)).